The primary structure comprises 380 residues: Homoserine O-succinyltransferase (380 aa).

The AB hydrolase-1 domain maps to 51–362 (NAVLICHALS…SKHGHDAFLL (312 aa)). The Nucleophile role is filled by S157. R227 is a substrate binding site. Catalysis depends on residues D324 and H357. D358 is a binding site for substrate.

It belongs to the AB hydrolase superfamily. MetX family. As to quaternary structure, homodimer.

The protein localises to the cytoplasm. The catalysed reaction is L-homoserine + succinyl-CoA = O-succinyl-L-homoserine + CoA. It participates in amino-acid biosynthesis; L-methionine biosynthesis via de novo pathway; O-succinyl-L-homoserine from L-homoserine: step 1/1. Its function is as follows. Transfers a succinyl group from succinyl-CoA to L-homoserine, forming succinyl-L-homoserine. This is Homoserine O-succinyltransferase from Cellvibrio japonicus (strain Ueda107) (Pseudomonas fluorescens subsp. cellulosa).